The chain runs to 139 residues: Histone H3 (139 aa).

The segment at methionine 1–lysine 48 is disordered. Position 5 is an N6,N6,N6-trimethyllysine; alternate (lysine 5). Lysine 5 is subject to N6,N6-dimethyllysine; alternate. N6-methyllysine; alternate is present on residues lysine 5 and lysine 12. N6-acetyllysine; alternate occurs at positions 12, 17, 21, 26, 30, and 42. An N6,N6-dimethyllysine; alternate modification is found at lysine 17. 4 positions are modified to N6-methyllysine; alternate: lysine 21, lysine 26, lysine 30, and lysine 42. 2 positions are modified to N6,N6,N6-trimethyllysine; alternate: lysine 30 and lysine 42. Residues lysine 30 and lysine 42 each carry the N6,N6-dimethyllysine; alternate modification. Residues lysine 62 and lysine 70 each carry the N6-acetyllysine modification. Lysine 85 bears the N6,N6,N6-trimethyllysine; alternate mark. Lysine 85 carries the post-translational modification N6,N6-dimethyllysine; alternate. Lysine 85 carries the post-translational modification N6-methyllysine; alternate.

Belongs to the histone H3 family. The nucleosome is a histone octamer containing two molecules each of H2A, H2B, H3 and H4 assembled in one H3-H4 heterotetramer and two H2A-H2B heterodimers. The octamer wraps approximately 147 bp of DNA. Post-translationally, mono-, di- and trimethylated by the COMPASS complex to form H3K4me1/2/3. H3K4me activates gene expression by regulating transcription elongation and plays a role in telomere length maintenance. H3K4me enrichment correlates with transcription levels, and occurs in a 5' to 3' gradient with H3K4me3 enrichment at the 5'-end of genes, shifting to H3K4me2 and then H3K4me1. Methylated by SET2 to form H3K36me. H3K36me represses gene expression. Methylated by DOT1 to form H3K79me. H3K79me is required for association of SIR proteins with telomeric regions and for telomeric silencing. The COMPASS-mediated formation of H3K4me2/3 and the DOT1-mediated formation of H3K79me require H2BK123ub1. Acetylation of histone H3 leads to transcriptional activation. Acetylated by GCN5 to form H3K14ac. H3K14ac can also be formed by ESA1. H3K56ac formation occurs predominantly in newly synthesized H3 molecules during G1, S and G2/M of the cell cycle and may be involved in DNA repair.

Its subcellular location is the nucleus. The protein localises to the chromosome. Functionally, core component of nucleosome. Nucleosomes wrap and compact DNA into chromatin, limiting DNA accessibility to the cellular machineries which require DNA as a template. Histones thereby play a central role in transcription regulation, DNA repair, DNA replication and chromosomal stability. DNA accessibility is regulated via a complex set of post-translational modifications of histones, also called histone code, and nucleosome remodeling. The polypeptide is Histone H3 (HHT1) (Yarrowia lipolytica (strain CLIB 122 / E 150) (Yeast)).